A 686-amino-acid chain; its full sequence is MSKIRVHEYAKKHNISSKDLMTKLKEMNIEVSNHMTMLDDEVVNKLDNEYQAEKPSVADEFEVEEKVVRSKKNSNKKKKKGKGNEDKRQENFAGRQQTQTVETPDKITFSGSLTVGDLAKKLSKEPSEIIKKLFMLGIMATINQDLDKDTIELIANDYGIEVEEEVIVSETEFETFIDEQDDEENLKERPAVVTIMGHVDHGKTTLLDSIRNSKVTAGEAGGITQHIGAYQVEVNDKKITFLDTPGHAAFTTMRARGAQVTDITILVVAADDGVMPQTVEAINHAKAAGVPIIVAVNKMDKPAANPDRVMQELTEYELVPEAWGGDTIFVPISAIQGEGIDNLLEMILLVSEVEEYKANPNRYATGTVIEAQLDKGKGTIATLLVQNGTLRVGDPIVVGTSFGRVRAMVSDIGRRVKVAGPSTPVEITGLNEVPQAGDRFMAFADEKKARQIGESRAQEALLAQRGEKSKLSLEDLFQQIQEGDVKEINLIVKADVQGSVEAMAASLRKIDVEGVKVKIIHTGVGAITESDIILASASNAIVIGFNVRPDVNAKRTAELENVDIRLHRIIYKVIEEIEAAMQGMLDPEFEEKVIGQAEVRQTFKVTKVGTIAGCYVTDGKITRDSGVRIIRDGVVIFEGQLDTLKRFKDDVKEVAQNYECGITIERYNDLKEGDIIEAYIMEEVKR.

The disordered stretch occupies residues 54–105; it reads KPSVADEFEVEEKVVRSKKNSNKKKKKGKGNEDKRQENFAGRQQTQTVETPD. Positions 69–81 are enriched in basic residues; sequence RSKKNSNKKKKKG. Residues 188–357 form the tr-type G domain; sequence ERPAVVTIMG…LLVSEVEEYK (170 aa). Residues 197-204 form a G1 region; that stretch reads GHVDHGKT. 197–204 contributes to the GTP binding site; that stretch reads GHVDHGKT. The segment at 222–226 is G2; the sequence is GITQH. The segment at 243–246 is G3; that stretch reads DTPG. GTP-binding positions include 243 to 247 and 297 to 300; these read DTPGH and NKMD. Positions 297–300 are G4; sequence NKMD. The segment at 333–335 is G5; it reads SAI.

Belongs to the TRAFAC class translation factor GTPase superfamily. Classic translation factor GTPase family. IF-2 subfamily.

It localises to the cytoplasm. Its function is as follows. One of the essential components for the initiation of protein synthesis. Protects formylmethionyl-tRNA from spontaneous hydrolysis and promotes its binding to the 30S ribosomal subunits. Also involved in the hydrolysis of GTP during the formation of the 70S ribosomal complex. In Bacillus cereus (strain 03BB102), this protein is Translation initiation factor IF-2.